The chain runs to 424 residues: Gamma-glutamyl phosphate reductase (424 aa).

The protein belongs to the gamma-glutamyl phosphate reductase family.

The protein localises to the cytoplasm. The catalysed reaction is L-glutamate 5-semialdehyde + phosphate + NADP(+) = L-glutamyl 5-phosphate + NADPH + H(+). It functions in the pathway amino-acid biosynthesis; L-proline biosynthesis; L-glutamate 5-semialdehyde from L-glutamate: step 2/2. Its function is as follows. Catalyzes the NADPH-dependent reduction of L-glutamate 5-phosphate into L-glutamate 5-semialdehyde and phosphate. The product spontaneously undergoes cyclization to form 1-pyrroline-5-carboxylate. This Shewanella woodyi (strain ATCC 51908 / MS32) protein is Gamma-glutamyl phosphate reductase.